Reading from the N-terminus, the 673-residue chain is tRNA 5-methylaminomethyl-2-thiouridine biosynthesis bifunctional protein MnmC (673 aa).

A tRNA (mnm(5)s(2)U34)-methyltransferase region spans residues 1-245 (MSHAPIQTAA…KREMLIGELP (245 aa)). The tract at residues 272–673 (IGGGVASALT…VRKLLKGRAV (402 aa)) is FAD-dependent cmnm(5)s(2)U34 oxidoreductase.

In the N-terminal section; belongs to the methyltransferase superfamily. tRNA (mnm(5)s(2)U34)-methyltransferase family. This sequence in the C-terminal section; belongs to the DAO family. It depends on FAD as a cofactor.

It localises to the cytoplasm. It carries out the reaction 5-aminomethyl-2-thiouridine(34) in tRNA + S-adenosyl-L-methionine = 5-methylaminomethyl-2-thiouridine(34) in tRNA + S-adenosyl-L-homocysteine + H(+). In terms of biological role, catalyzes the last two steps in the biosynthesis of 5-methylaminomethyl-2-thiouridine (mnm(5)s(2)U) at the wobble position (U34) in tRNA. Catalyzes the FAD-dependent demodification of cmnm(5)s(2)U34 to nm(5)s(2)U34, followed by the transfer of a methyl group from S-adenosyl-L-methionine to nm(5)s(2)U34, to form mnm(5)s(2)U34. The sequence is that of tRNA 5-methylaminomethyl-2-thiouridine biosynthesis bifunctional protein MnmC from Serratia proteamaculans (strain 568).